The chain runs to 56 residues: UPF0391 membrane protein Noc_0484 (56 aa).

The next 2 membrane-spanning stretches (helical) occupy residues 6 to 26 (VTFL…IAGI) and 29 to 49 (EIAW…LVLG).

Belongs to the UPF0391 family.

Its subcellular location is the cell membrane. In Nitrosococcus oceani (strain ATCC 19707 / BCRC 17464 / JCM 30415 / NCIMB 11848 / C-107), this protein is UPF0391 membrane protein Noc_0484.